The following is a 247-amino-acid chain: Chalcone--flavanone isomerase (247 aa).

Substrate is bound by residues Thr-56, Asn-121, and Ser-198. Residues 223-235 are compositionally biased toward basic and acidic residues; that stretch reads ENKVEEDATKTDQ. The tract at residues 223 to 247 is disordered; it reads ENKVEEDATKTDQEEANDLSLAKEN.

The protein belongs to the chalcone isomerase family.

It carries out the reaction a chalcone = a flavanone.. The protein operates within secondary metabolite biosynthesis; flavonoid biosynthesis. Functionally, catalyzes the intramolecular cyclization of bicyclic chalcones into tricyclic (S)-flavanones. Responsible for the isomerization of 4,2',4',6'-tetrahydroxychalcone (also termed chalcone) into naringenin. The sequence is that of Chalcone--flavanone isomerase (CHI) from Raphanus sativus (Radish).